The chain runs to 330 residues: Protein ANTHESIS POMOTING FACTOR 1 (330 aa).

WD repeat units lie at residues 22–61 (DFGGKIHSVGFHRTDDLLVTSSEDDSLRLFDIANAKQLKI), 112–151 (GHKDRVVSLCMSPINDSFMSGSLDRSVRLWDLRVNACQGI), 153–191 (HLRGRPAVAYDQQGLVFAIAMEGGAVKLFDSRCYDKGPF), 198–237 (GDTAEVNDIKFSNDGKSMLLTTTNNNIYVLDAYRGEKKCG), 242–281 (PSQGTPIEATFTPDGKYVLSGSGDGTLHAWNIENPSEVAR), and 284–323 (NNIGVVSCLKWAPRRAMFVAASTVLTFWIPNDGESPAPAD).

The protein belongs to the WD repeat SWD2 family. As to expression, expressed in the shoot apical meristem (SAM), embryos, seedlings, cotyledons, leaves primordia, young leaves and roots.

The protein localises to the nucleus. Its function is as follows. Component of a chromatin regulatory complex involved in regulating chromatin structure in the nucleus. Promotes flowering under long days (LD) via the regulation of bolting. In Arabidopsis thaliana (Mouse-ear cress), this protein is Protein ANTHESIS POMOTING FACTOR 1.